The primary structure comprises 295 residues: Aspartate carbamoyltransferase catalytic subunit (295 aa).

Arg-49 and Thr-50 together coordinate carbamoyl phosphate. An L-aspartate-binding site is contributed by Lys-77. Residues Arg-99, His-127, and Gln-130 each coordinate carbamoyl phosphate. Residues Arg-161 and Arg-212 each contribute to the L-aspartate site. Residues Gly-251 and Pro-252 each coordinate carbamoyl phosphate.

It belongs to the aspartate/ornithine carbamoyltransferase superfamily. ATCase family. As to quaternary structure, heterododecamer (2C3:3R2) of six catalytic PyrB chains organized as two trimers (C3), and six regulatory PyrI chains organized as three dimers (R2).

The enzyme catalyses carbamoyl phosphate + L-aspartate = N-carbamoyl-L-aspartate + phosphate + H(+). The protein operates within pyrimidine metabolism; UMP biosynthesis via de novo pathway; (S)-dihydroorotate from bicarbonate: step 2/3. In terms of biological role, catalyzes the condensation of carbamoyl phosphate and aspartate to form carbamoyl aspartate and inorganic phosphate, the committed step in the de novo pyrimidine nucleotide biosynthesis pathway. The chain is Aspartate carbamoyltransferase catalytic subunit from Aliarcobacter butzleri (strain RM4018) (Arcobacter butzleri).